Consider the following 117-residue polypeptide: Large ribosomal subunit protein bL19 (117 aa).

Belongs to the bacterial ribosomal protein bL19 family.

This protein is located at the 30S-50S ribosomal subunit interface and may play a role in the structure and function of the aminoacyl-tRNA binding site. The sequence is that of Large ribosomal subunit protein bL19 from Desulfotalea psychrophila (strain LSv54 / DSM 12343).